An 853-amino-acid polypeptide reads, in one-letter code: DNA mismatch repair protein MutS (853 aa).

614-621 (GPNMGGKS) is an ATP binding site.

Belongs to the DNA mismatch repair MutS family.

This protein is involved in the repair of mismatches in DNA. It is possible that it carries out the mismatch recognition step. This protein has a weak ATPase activity. This Escherichia coli O7:K1 (strain IAI39 / ExPEC) protein is DNA mismatch repair protein MutS.